A 68-amino-acid chain; its full sequence is MNYVSIFVLIVACLCVLADAQLTFTSSWGGGKRGAVAATMSCRSEETIAAIYKLIQNEAERLLLCQKP.

The first 20 residues, Met1–Ala20, serve as a signal peptide directing secretion. Gln21 bears the Pyrrolidone carboxylic acid mark. A Glycine amide modification is found at Gly30. The propeptide occupies Gly34–Pro68.

As to expression, expressed in antennal lobe (AL), corpora cardiaca (CC), corpora allata (CA) and gnathal ganglion (GNG) (at protein level). Expression in CC and CA detected in all animals, expression in GNG in some animals and in AL in few animals (at protein level).

The protein resides in the secreted. This hormone, released from cells in the corpora cardiaca, causes release of diglycerides from the fat body and stimulation of muscles to use these diglycerides as an energy source during energy-demanding processes. This chain is Adipokinetic prohormone type 1, found in Agrotis ipsilon (Black cutworm moth).